Here is a 205-residue protein sequence, read N- to C-terminus: Small ribosomal subunit protein uS4 (205 aa).

Residues 95 to 156 (SRLDNIVYRM…KTIKIPIVKA (62 aa)) enclose the S4 RNA-binding domain.

It belongs to the universal ribosomal protein uS4 family. In terms of assembly, part of the 30S ribosomal subunit. Contacts protein S5. The interaction surface between S4 and S5 is involved in control of translational fidelity.

Functionally, one of the primary rRNA binding proteins, it binds directly to 16S rRNA where it nucleates assembly of the body of the 30S subunit. In terms of biological role, with S5 and S12 plays an important role in translational accuracy. This Mycoplasma pneumoniae (strain ATCC 29342 / M129 / Subtype 1) (Mycoplasmoides pneumoniae) protein is Small ribosomal subunit protein uS4.